Here is a 137-residue protein sequence, read N- to C-terminus: MQCGLVGKIIKRFEQKGFRLVAMKFLPASEEHLKQHYIDLKDRPFFPGLVKYMNSGPVVAMVWEGLNVVKTGRVMLGETNPADSKPGTIRGDFCIQVGRNIIHGSDSVKSAEKEISLRFKPEELVDYKSCAHDWVYE.

Residues F45, R73, T79, R90, and N100 each coordinate ATP. H103 serves as the catalytic Pros-phosphohistidine intermediate.

It belongs to the NDK family. Mg(2+) serves as cofactor.

It carries out the reaction a 2'-deoxyribonucleoside 5'-diphosphate + ATP = a 2'-deoxyribonucleoside 5'-triphosphate + ADP. It catalyses the reaction a ribonucleoside 5'-diphosphate + ATP = a ribonucleoside 5'-triphosphate + ADP. In terms of biological role, major role in the synthesis of nucleoside triphosphates other than ATP. The ATP gamma phosphate is transferred to the NDP beta phosphate via a ping-pong mechanism, using a phosphorylated active-site intermediate. In Homo sapiens (Human), this protein is Putative nucleoside diphosphate kinase (NME2P1).